A 468-amino-acid polypeptide reads, in one-letter code: Glutamate--tRNA ligase (468 aa).

Positions 11–21 (PSPTGFIHLGN) match the 'HIGH' region motif. The short motif at 243–247 (KMSKR) is the 'KMSKS' region element. Lys-246 contributes to the ATP binding site.

The protein belongs to the class-I aminoacyl-tRNA synthetase family. Glutamate--tRNA ligase type 1 subfamily. As to quaternary structure, monomer.

The protein localises to the cytoplasm. The catalysed reaction is tRNA(Glu) + L-glutamate + ATP = L-glutamyl-tRNA(Glu) + AMP + diphosphate. In terms of biological role, catalyzes the attachment of glutamate to tRNA(Glu) in a two-step reaction: glutamate is first activated by ATP to form Glu-AMP and then transferred to the acceptor end of tRNA(Glu). The polypeptide is Glutamate--tRNA ligase (Delftia acidovorans (strain DSM 14801 / SPH-1)).